The primary structure comprises 443 residues: Ribosomal protein uS12 methylthiotransferase RimO (443 aa).

The MTTase N-terminal domain maps to 8–118 (PKVGFVSLGC…VVNAVHEVVP (111 aa)). The [4Fe-4S] cluster site is built by Cys17, Cys53, Cys82, Cys151, Cys155, and Cys158. The 239-residue stretch at 137-375 (LTPRHYAYLK…MAHQQAISTA (239 aa)) folds into the Radical SAM core domain. In terms of domain architecture, TRAM spans 378-443 (QLRIGKEIEV…DEYDMWAEPI (66 aa)).

This sequence belongs to the methylthiotransferase family. RimO subfamily. It depends on [4Fe-4S] cluster as a cofactor.

It is found in the cytoplasm. It catalyses the reaction L-aspartate(89)-[ribosomal protein uS12]-hydrogen + (sulfur carrier)-SH + AH2 + 2 S-adenosyl-L-methionine = 3-methylsulfanyl-L-aspartate(89)-[ribosomal protein uS12]-hydrogen + (sulfur carrier)-H + 5'-deoxyadenosine + L-methionine + A + S-adenosyl-L-homocysteine + 2 H(+). Its function is as follows. Catalyzes the methylthiolation of an aspartic acid residue of ribosomal protein uS12. The polypeptide is Ribosomal protein uS12 methylthiotransferase RimO (Pseudomonas putida (strain GB-1)).